The following is a 261-amino-acid chain: Cytochrome c oxidase subunit 3 (261 aa).

Residues 1 to 15 are Mitochondrial matrix-facing; the sequence is MTHQTHAYHMVNPSP. The helical transmembrane segment at 16-34 threads the bilayer; it reads WPLTGALSALLMTSGLIMW. Topologically, residues 35–40 are mitochondrial intermembrane; it reads FHFNSM. A helical transmembrane segment spans residues 41–66; the sequence is TLLMLGLTTNMLTMYQWWRDIIREST. Over 67 to 72 the chain is Mitochondrial matrix; that stretch reads FQGHHT. A helical transmembrane segment spans residues 73-105; sequence SAVQKGLRYGMILFIISEVLFFTGFFWAFYHSS. Residues 106–128 are Mitochondrial intermembrane-facing; it reads LAPTPELGGCWPPTGIHPLNPLE. Residues 129–152 form a helical membrane-spanning segment; sequence VPLLNTSVLLASGVSITWAHHSLM. Residues 153-155 lie on the Mitochondrial matrix side of the membrane; the sequence is EGN. The chain crosses the membrane as a helical span at residues 156–183; that stretch reads RNHMLQALFITIALGVYFTLLQASEYYE. At 184-190 the chain is on the mitochondrial intermembrane side; that stretch reads APFTISD. The helical transmembrane segment at 191 to 223 threads the bilayer; the sequence is GVYGSTFFVATGFHGLHVIIGSTFLIVCFFRQL. Over 224–232 the chain is Mitochondrial matrix; it reads KFHFTSTHH. A helical transmembrane segment spans residues 233 to 256; sequence FGFEAAAWYWHFVDVVWLFLYVSI. Topologically, residues 257–261 are mitochondrial intermembrane; the sequence is YWWGS.

This sequence belongs to the cytochrome c oxidase subunit 3 family. Component of the cytochrome c oxidase (complex IV, CIV), a multisubunit enzyme composed of 14 subunits. The complex is composed of a catalytic core of 3 subunits MT-CO1, MT-CO2 and MT-CO3, encoded in the mitochondrial DNA, and 11 supernumerary subunits COX4I, COX5A, COX5B, COX6A, COX6B, COX6C, COX7A, COX7B, COX7C, COX8 and NDUFA4, which are encoded in the nuclear genome. The complex exists as a monomer or a dimer and forms supercomplexes (SCs) in the inner mitochondrial membrane with NADH-ubiquinone oxidoreductase (complex I, CI) and ubiquinol-cytochrome c oxidoreductase (cytochrome b-c1 complex, complex III, CIII), resulting in different assemblies (supercomplex SCI(1)III(2)IV(1) and megacomplex MCI(2)III(2)IV(2)).

It is found in the mitochondrion inner membrane. It carries out the reaction 4 Fe(II)-[cytochrome c] + O2 + 8 H(+)(in) = 4 Fe(III)-[cytochrome c] + 2 H2O + 4 H(+)(out). In terms of biological role, component of the cytochrome c oxidase, the last enzyme in the mitochondrial electron transport chain which drives oxidative phosphorylation. The respiratory chain contains 3 multisubunit complexes succinate dehydrogenase (complex II, CII), ubiquinol-cytochrome c oxidoreductase (cytochrome b-c1 complex, complex III, CIII) and cytochrome c oxidase (complex IV, CIV), that cooperate to transfer electrons derived from NADH and succinate to molecular oxygen, creating an electrochemical gradient over the inner membrane that drives transmembrane transport and the ATP synthase. Cytochrome c oxidase is the component of the respiratory chain that catalyzes the reduction of oxygen to water. Electrons originating from reduced cytochrome c in the intermembrane space (IMS) are transferred via the dinuclear copper A center (CU(A)) of subunit 2 and heme A of subunit 1 to the active site in subunit 1, a binuclear center (BNC) formed by heme A3 and copper B (CU(B)). The BNC reduces molecular oxygen to 2 water molecules using 4 electrons from cytochrome c in the IMS and 4 protons from the mitochondrial matrix. This Damaliscus lunatus (Tsessebe) protein is Cytochrome c oxidase subunit 3 (MT-CO3).